The following is a 256-amino-acid chain: MLAKFGLCAVFLVLGTAATFDTDPEEASPRRARFSSNSPSDVARCLNGALAVGCGTFACLENSTCDTDGMHDICQLFFHTAATFNTQGKTFVKESLRCIANGVTSKVFQTIRRCGVFQRMISEVQEECYSRLDICGVARSNPEAIGEVVQVPAHFPNRYYSTLLQSLLACDEETVAVVRAGLVARLGPDMETLFQLLQNKHCPQGSNQGPNSAPAGWRWPMGSPPSFKIQPSMRGRDPTHLFARKRSVEALERVME.

The first 18 residues, Met-1–Ala-18, serve as a signal peptide directing secretion. Positions Thr-19–Arg-33 are excised as a propeptide. Asn-62 carries an N-linked (GlcNAc...) asparagine glycan.

The protein belongs to the stanniocalcin family. In terms of assembly, homodimer; disulfide-linked. In terms of tissue distribution, produced and secreted by the corpuscles of Stannius.

It is found in the secreted. In terms of biological role, its primary function is the prevention of hypercalcemia. Upon release into the circulation, it lowers calcium transport by the gills, thereby reducing its rate of influx from the environment into the extracellular compartment. STC also stimulates phosphate reabsorption by renal proximal tubules. The consequence of this action is increased levels of plasma phosphate, which combines with excess calcium and promotes its disposal into bone and scales. This Oncorhynchus kisutch (Coho salmon) protein is Stanniocalcin (stc).